A 431-amino-acid polypeptide reads, in one-letter code: Serine hydroxymethyltransferase (431 aa).

(6S)-5,6,7,8-tetrahydrofolate contacts are provided by residues Leu-127 and 131 to 133; that span reads GHL. At Lys-236 the chain carries N6-(pyridoxal phosphate)lysine.

The protein belongs to the SHMT family. As to quaternary structure, homodimer. Pyridoxal 5'-phosphate serves as cofactor.

Its subcellular location is the cytoplasm. It carries out the reaction (6R)-5,10-methylene-5,6,7,8-tetrahydrofolate + glycine + H2O = (6S)-5,6,7,8-tetrahydrofolate + L-serine. It participates in one-carbon metabolism; tetrahydrofolate interconversion. It functions in the pathway amino-acid biosynthesis; glycine biosynthesis; glycine from L-serine: step 1/1. In terms of biological role, catalyzes the reversible interconversion of serine and glycine with tetrahydrofolate (THF) serving as the one-carbon carrier. This reaction serves as the major source of one-carbon groups required for the biosynthesis of purines, thymidylate, methionine, and other important biomolecules. Also exhibits THF-independent aldolase activity toward beta-hydroxyamino acids, producing glycine and aldehydes, via a retro-aldol mechanism. The protein is Serine hydroxymethyltransferase of Granulibacter bethesdensis (strain ATCC BAA-1260 / CGDNIH1).